The sequence spans 333 residues: Zinc-type alcohol dehydrogenase-like protein SACOL2177 (333 aa).

This sequence belongs to the zinc-containing alcohol dehydrogenase family. Quinone oxidoreductase subfamily.

The chain is Zinc-type alcohol dehydrogenase-like protein SACOL2177 from Staphylococcus aureus (strain COL).